The following is a 464-amino-acid chain: MAHVRHFRTLVSGFYFWEAALLLSLVATKETDSARSRSAPMSPSDFLDKLMGRTSGYDARIRPNFKGPPVNVTCNIFINSFGSIAETTMDYRVNIFLRQKWNDPRLAYSEYPDDSLDLDPSMLDSIWKPDLFFANEKGANFHEVTTDNKLLRIFKNGNVLYSIRLTLTLSCPMDLKNFPMDVQTCIMQLESFGYTMNDLIFEWQDEAPVQVAEGLTLPQFLLKEEKDLRYCTKHYNTGKFTCIEVRFHLERQMGYYLIQMYIPSLLIVILSWVSFWINMDAAPARVALGITTVLTMTTQSSGSRASLPKVSYVKAIDIWMAVCLLFVFSALLEYAAVNFVSRQHKELLRFRRKRKNKTEAFALEKFYRFSDMDDEVRESRFSFTAYGMGPCLQAKDGMTPKGPNHPVQVMPKSPDEMRKVFIDRAKKIDTISRACFPLAFLIFNIFYWVIYKILRHEDIHQQQD.

An N-terminal signal peptide occupies residues 1 to 33; it reads MAHVRHFRTLVSGFYFWEAALLLSLVATKETDS. Over 34-255 the chain is Extracellular; that stretch reads ARSRSAPMSP…RFHLERQMGY (222 aa). Residue asparagine 71 is glycosylated (N-linked (GlcNAc...) asparagine). Cysteine 171 and cysteine 185 form a disulfide bridge. Positions 225 and 227 each coordinate Zn(2+). A disulfide bond links cysteine 231 and cysteine 242. 235-240 lines the strychnine pocket; sequence YNTGKF. Histidine 248 lines the Zn(2+) pocket. A helical transmembrane segment spans residues 256-277; that stretch reads YLIQMYIPSLLIVILSWVSFWI. Residues 278–282 lie on the Cytoplasmic side of the membrane; that stretch reads NMDAA. A helical transmembrane segment spans residues 283-303; it reads PARVALGITTVLTMTTQSSGS. Topologically, residues 304–314 are extracellular; the sequence is RASLPKVSYVK. Residues 315–335 form a helical membrane-spanning segment; it reads AIDIWMAVCLLFVFSALLEYA. Topologically, residues 336 to 430 are cytoplasmic; sequence AVNFVSRQHK…FIDRAKKIDT (95 aa). Phosphoserine occurs at positions 370 and 379. A helical membrane pass occupies residues 431–451; that stretch reads ISRACFPLAFLIFNIFYWVIY. Over 452-464 the chain is Extracellular; sequence KILRHEDIHQQQD.

The protein belongs to the ligand-gated ion channel (TC 1.A.9) family. Glycine receptor (TC 1.A.9.3) subfamily. GLRA3 sub-subfamily. As to quaternary structure, homopentamer (in vitro). Heteropentamer composed of GLRA3 and GLRB. Both homopentamers and heteropentamers form functional ion channels, but their characteristics are subtly different. In terms of processing, phosphorylated by PKA; this causes down-regulation of channel activity. Widely distributed throughout the central nervous system.

The protein localises to the postsynaptic cell membrane. It localises to the perikaryon. Its subcellular location is the cell projection. It is found in the dendrite. The protein resides in the synapse. The protein localises to the cell membrane. It catalyses the reaction chloride(in) = chloride(out). Glycine receptors are ligand-gated chloride channels. Channel opening is triggered by extracellular glycine. Channel characteristics depend on the subunit composition; heteropentameric channels display faster channel closure. Plays an important role in the down-regulation of neuronal excitability. Contributes to the generation of inhibitory postsynaptic currents. Contributes to increased pain perception in response to increased prostaglandin E2 levels. Plays a role in cellular responses to ethanol. This Homo sapiens (Human) protein is Glycine receptor subunit alpha-3 (GLRA3).